Reading from the N-terminus, the 990-residue chain is Transposase for transposon Tn3926 (990 aa).

Positions 673-698 (GDGTTSSSDGQNFRTGSKAESTGHIN) are disordered. Residues 674–696 (DGTTSSSDGQNFRTGSKAESTGH) are compositionally biased toward polar residues.

Belongs to the transposase 7 family.

Functionally, required for transposition of transposon Tn3926. The sequence is that of Transposase for transposon Tn3926 (tnpA) from Escherichia coli.